The sequence spans 368 residues: Alanine racemase (368 aa).

Lysine 34 (proton acceptor; specific for D-alanine) is an active-site residue. Lysine 34 carries the N6-(pyridoxal phosphate)lysine modification. Arginine 132 is a substrate binding site. Residue tyrosine 261 is the Proton acceptor; specific for L-alanine of the active site. Methionine 309 serves as a coordination point for substrate.

Belongs to the alanine racemase family. Pyridoxal 5'-phosphate serves as cofactor.

The catalysed reaction is L-alanine = D-alanine. It participates in amino-acid biosynthesis; D-alanine biosynthesis; D-alanine from L-alanine: step 1/1. Its function is as follows. Catalyzes the interconversion of L-alanine and D-alanine. May also act on other amino acids. This is Alanine racemase (alr) from Carboxydothermus hydrogenoformans (strain ATCC BAA-161 / DSM 6008 / Z-2901).